The primary structure comprises 663 residues: Meiotically up-regulated gene 60 protein (663 aa).

Positions 578 to 644 (PAEMHFYVPE…SENLWAVRSL (67 aa)) constitute a KH domain.

Its subcellular location is the cytoplasm. It is found in the nucleus. The protein localises to the cytoskeleton. The protein resides in the microtubule organizing center. It localises to the spindle pole body. Its function is as follows. Has a role in meiosis. The protein is Meiotically up-regulated gene 60 protein (mug60) of Schizosaccharomyces pombe (strain 972 / ATCC 24843) (Fission yeast).